The following is a 151-amino-acid chain: Ribosome maturation factor RimP (151 aa).

This sequence belongs to the RimP family.

It is found in the cytoplasm. Functionally, required for maturation of 30S ribosomal subunits. The chain is Ribosome maturation factor RimP from Halorhodospira halophila (strain DSM 244 / SL1) (Ectothiorhodospira halophila (strain DSM 244 / SL1)).